Reading from the N-terminus, the 378-residue chain is Deoxyguanosinetriphosphate triphosphohydrolase-like protein (378 aa).

The disordered stretch occupies residues 1–28; the sequence is MLAPYACQPGESRGRQQPESMSTFRSPF. Residues 15 to 26 show a composition bias toward polar residues; that stretch reads RQQPESMSTFRS. The HD domain maps to 62–198; sequence RLTHSIEVAQ…AAIADDVAYS (137 aa).

The protein belongs to the dGTPase family. Type 2 subfamily.

The chain is Deoxyguanosinetriphosphate triphosphohydrolase-like protein from Cereibacter sphaeroides (strain ATCC 17025 / ATH 2.4.3) (Rhodobacter sphaeroides).